Here is a 199-residue protein sequence, read N- to C-terminus: NADH-quinone oxidoreductase subunit C (199 aa).

The protein belongs to the complex I 30 kDa subunit family. As to quaternary structure, NDH-1 is composed of 14 different subunits. Subunits NuoB, C, D, E, F, and G constitute the peripheral sector of the complex.

The protein resides in the cell inner membrane. It carries out the reaction a quinone + NADH + 5 H(+)(in) = a quinol + NAD(+) + 4 H(+)(out). In terms of biological role, NDH-1 shuttles electrons from NADH, via FMN and iron-sulfur (Fe-S) centers, to quinones in the respiratory chain. The immediate electron acceptor for the enzyme in this species is believed to be ubiquinone. Couples the redox reaction to proton translocation (for every two electrons transferred, four hydrogen ions are translocated across the cytoplasmic membrane), and thus conserves the redox energy in a proton gradient. The sequence is that of NADH-quinone oxidoreductase subunit C from Cupriavidus metallidurans (strain ATCC 43123 / DSM 2839 / NBRC 102507 / CH34) (Ralstonia metallidurans).